The sequence spans 197 residues: CDLACSLIYAPVCGSDGKTYPSECSMEATACIDEVVITKVHDGPCETKCSAACTKEYNPQCGTDGVTYANPCTLEYAKCKSDGEITFDHAGPCKPKCPTVCTLEYNPQCGTDGRTYGNPCQLKVAECESDGRITLDHPGECDACSLKKVVGPCRGAFRRYYFDSVSGKCEEFVYGGCGGNDNNFKTLDACQKRCMEE.

Intrachain disulfides connect Cys1-Cys31, Cys5-Cys24, Cys13-Cys45, Cys49-Cys79, Cys53-Cys72, Cys61-Cys93, Cys97-Cys127, Cys101-Cys120, Cys109-Cys141, Cys144-Cys194, Cys153-Cys177, and Cys169-Cys190. 3 Kazal-like domains span residues 1–47, 48–95, and 96–143; these read CDLA…PCET, KCSA…PCKP, and KCPT…ECDA. The BPTI/Kunitz inhibitor domain maps to 144-194; the sequence is CSLKKVVGPCRGAFRRYYFDSVSGKCEEFVYGGCGGNDNNFKTLDACQKRC.

Functionally, inhibits trypsin, kallikrein, subtilisin Carlsberg, human leukocyte elastase, porcine pancreatic elastase and chymotrypsin. Two domains are for the inhibition of chymotrypsin. The sequence is that of Four-domain proteases inhibitor from Melithaea caledonica.